The primary structure comprises 616 residues: RNA-directed RNA polymerase (616 aa).

It catalyses the reaction RNA(n) + a ribonucleoside 5'-triphosphate = RNA(n+1) + diphosphate. Functionally, RNA-dependent RNA polymerase which replicates the viral genome. The sequence is that of RNA-directed RNA polymerase from White clover cryptic virus 1 (isolate Boccardo/2004) (WCCV-1).